The chain runs to 79 residues: Cell division protein ZapB (79 aa).

Positions 3–79 (LEVFEKLEAK…QALLGRMEEV (77 aa)) form a coiled coil. K8 is modified (N6-acetyllysine). The tract at residues 34-65 (NNSLSQEVQNAQHQREELERENNHLKEQQNGW) is disordered. Residues 35-45 (NSLSQEVQNAQ) are compositionally biased toward polar residues. Residues 46–60 (HQREELERENNHLKE) show a composition bias toward basic and acidic residues.

It belongs to the ZapB family. In terms of assembly, homodimer. The ends of the coiled-coil dimer bind to each other, forming polymers. Interacts with FtsZ.

Its subcellular location is the cytoplasm. Functionally, non-essential, abundant cell division factor that is required for proper Z-ring formation. It is recruited early to the divisome by direct interaction with FtsZ, stimulating Z-ring assembly and thereby promoting cell division earlier in the cell cycle. Its recruitment to the Z-ring requires functional FtsA or ZipA. The sequence is that of Cell division protein ZapB from Shigella boydii serotype 18 (strain CDC 3083-94 / BS512).